An 88-amino-acid polypeptide reads, in one-letter code: Acyl-CoA-binding domain-containing protein 7 (88 aa).

The ACB domain occupies 3–88; the sequence is LQADFDQAAQ…ARELIEKYGI (86 aa). Residues arginine 15, 30-34, lysine 56, and tyrosine 75 contribute to the an acyl-CoA site; that span reads YGLYK.

This sequence belongs to the ACBD7 family.

Binds medium- and long-chain acyl-CoA esters. In Mus musculus (Mouse), this protein is Acyl-CoA-binding domain-containing protein 7 (Acbd7).